Reading from the N-terminus, the 457-residue chain is Cysteine desulfurase (457 aa).

Ala-127, Thr-128, Gln-235, Ser-255, and His-257 together coordinate pyridoxal 5'-phosphate. Lys-258 is subject to N6-(pyridoxal phosphate)lysine. Thr-295 is a pyridoxal 5'-phosphate binding site. Catalysis depends on Cys-381, which acts as the Cysteine persulfide intermediate. [2Fe-2S] cluster is bound at residue Cys-381. Cys-381 provides a ligand contact to Zn(2+). Cys-381 bears the Cysteine persulfide mark.

This sequence belongs to the class-V pyridoxal-phosphate-dependent aminotransferase family. NifS/IscS subfamily. As to quaternary structure, homodimer. Component of the mitochondrial core iron-sulfur cluster (ISC) complex composed of NFS1, LYRM4, NDUFAB1, ISCU, FXN, and FDX2; this complex is a heterohexamer containing two copies of each monomer. Component of cyteine desulfurase complex composed of NFS1, LYRM4 and NDUFAB1; this complex contributes to the activation of cysteine desulfurase activity and NFS1 stabilization. Interacts (homodimer form) with ISCU (D-state); each monomer interacts with the C-terminal regions of each NFS1 monomer. Interacts with HSPA9. Interacts (via homodimer form) with FDX2. Interacts (via homodimer form) with FXN. Interacts with LYRM4. Component of a complex composed of FXN, NFS1, LYRM4 and ISCU. Monomer. Homodimer. Oligomer. Interacts with ISCU. Component of the cysteine desulfurase complex composed of NFS1 and LYRM4; this complex contributes to the activation of cysteine desulfurase activity. Interacts with MOCS3. Requires pyridoxal 5'-phosphate as cofactor. Post-translationally, N-gluconoylated. Cysteine persulfide intermediate is reduced by thiol-containing molecules like glutathione and L-cysteine. Persulfide reduction is a rate-limiting step of cysteine desulfurase catalytic cycle. In terms of tissue distribution, predominantly expressed in heart and skeletal muscle. Also found in brain, liver and pancreas.

It localises to the mitochondrion. It is found in the cytoplasm. The protein localises to the nucleus. The protein resides in the cytoskeleton. Its subcellular location is the microtubule organizing center. It localises to the centrosome. It carries out the reaction (sulfur carrier)-H + L-cysteine = (sulfur carrier)-SH + L-alanine. It catalyses the reaction L-cysteinyl-[cysteine desulfurase] + L-cysteine = S-sulfanyl-L-cysteinyl-[cysteine desulfurase] + L-alanine. Active only in complex with LYRM4. Cysteine desulfurase, of the core iron-sulfur cluster (ISC) assembly complex, that catalyzes the desulfuration of L-cysteine to L-alanine, as component of the cysteine desulfurase complex, leading to the formation of a cysteine persulfide intermediate at the active site cysteine residue and participates in the [2Fe-2S] clusters assembly on the scaffolding protein ISCU. The persulfide is then transferred on the flexible Cys loop from the catalytic site of NFS1 to the surface of NFS1. After the NFS1-linked persulfide sulfur is transferred to one of the conserved Cys residues of the scaffold, a reaction assisted by FXN. The core iron-sulfur cluster (ISC) assembly complex is involved in the de novo synthesis of a [2Fe-2S] cluster, the first step of the mitochondrial iron-sulfur protein biogenesis. This process is initiated by the cysteine desulfurase complex (NFS1:LYRM4:NDUFAB1) that produces persulfide which is delivered on the scaffold protein ISCU in a FXN-dependent manner. Then this complex is stabilized by FDX2 which provides reducing equivalents to accomplish the [2Fe-2S] cluster assembly. Finally, the [2Fe-2S] cluster is transferred from ISCU to chaperone proteins, including HSCB, HSPA9 and GLRX5. Functionally, may catalyze the desulfuration of L-cysteine to L-alanine as component of the cysteine desulfurase complex (NFS1:LYRM4), leading to the formation of a cysteine persulfide intermediate. Acts as a sulfur donor for MOCS3 by transferring the sulfur of the cysteine persulfide intermediate on MOCS3. This is Cysteine desulfurase from Homo sapiens (Human).